A 322-amino-acid chain; its full sequence is Probable cell division protein WhiA (322 aa).

A DNA-binding region (H-T-H motif) is located at residues 279 to 312; sequence SLKELGELWTPPVGKSGVNHRIRKIERLAEKLRS.

It belongs to the WhiA family.

In terms of biological role, involved in cell division and chromosome segregation. In Desulforamulus reducens (strain ATCC BAA-1160 / DSM 100696 / MI-1) (Desulfotomaculum reducens), this protein is Probable cell division protein WhiA.